The chain runs to 502 residues: Lysine--tRNA ligase (502 aa).

Glu398 and Glu405 together coordinate Mg(2+).

It belongs to the class-II aminoacyl-tRNA synthetase family. In terms of assembly, homodimer. It depends on Mg(2+) as a cofactor.

The protein localises to the cytoplasm. It catalyses the reaction tRNA(Lys) + L-lysine + ATP = L-lysyl-tRNA(Lys) + AMP + diphosphate. The protein is Lysine--tRNA ligase of Thermotoga sp. (strain RQ2).